The following is a 307-amino-acid chain: Pyridoxal 5'-phosphate synthase subunit PdxS (307 aa).

D37 lines the D-ribose 5-phosphate pocket. K94 acts as the Schiff-base intermediate with D-ribose 5-phosphate in catalysis. G166 is a binding site for D-ribose 5-phosphate. Residue R178 participates in D-glyceraldehyde 3-phosphate binding. Residues G227 and 248–249 each bind D-ribose 5-phosphate; that span reads GS.

It belongs to the PdxS/SNZ family. In terms of assembly, in the presence of PdxT, forms a dodecamer of heterodimers.

The enzyme catalyses aldehydo-D-ribose 5-phosphate + D-glyceraldehyde 3-phosphate + L-glutamine = pyridoxal 5'-phosphate + L-glutamate + phosphate + 3 H2O + H(+). Its pathway is cofactor biosynthesis; pyridoxal 5'-phosphate biosynthesis. Catalyzes the formation of pyridoxal 5'-phosphate from ribose 5-phosphate (RBP), glyceraldehyde 3-phosphate (G3P) and ammonia. The ammonia is provided by the PdxT subunit. Can also use ribulose 5-phosphate and dihydroxyacetone phosphate as substrates, resulting from enzyme-catalyzed isomerization of RBP and G3P, respectively. In Mycobacterium leprae (strain Br4923), this protein is Pyridoxal 5'-phosphate synthase subunit PdxS.